Consider the following 639-residue polypeptide: MNRFTAYAALFFIFSLCSTAKEAGFQHPAFNFRGTSTMSALSGDYSAAPTPLYKSWALPSSLNLTTQPPPLLTDRSYYELVQALISKMRLDCQTVGDMTWRHLSEMLFASWNSVKEVSLKAASVTLWAIISIWFGLYWTLARLITLFLWTFSIEALCLILLGCITSLIYKGALSLSEHLPVFLFMSPLKIIWRAAFSKRNYKNEKAVEGYKGFSVPQKPPKSAVIELQHENGSHLGYANCIRLYSGENALVTAEHCLEGAFATSLKTGNRIPMSTFFPIFKSARNDISILVGPPNWEGLLSVKGAHFITADKIGKGPASFYTLEKGEWMCHSATIDGAHHQFVSVLCNTGPGYSGTGFWSSKNLLGVLKGFPLEEECNYNVMSVIPSIPGITSPNYVFESTAVKGRVFSDETVKELEREASEAVKKLARFKSLTGKNWANDYDSDEDYGLEKEAATNAPAEKTAQTNSAEKTAPSTSAEKTAPTNKPLNGRAAPPAKTNGNSDIPDAAISAPPMDKMVEQIITAMVGRINLSEIEEKIVSRVSQKALQKPKQNKRGRRGGKNKQNNLPPTSTQSISGAPKKKAVPQASGSAGISPATTTPAPKEKPSGGKNSAKFIPSWRIKQQDSAGQKPDLKLNSKA.

The N-terminal stretch at 1–20 (MNRFTAYAALFFIFSLCSTA) is a signal peptide. Transmembrane regions (helical) follow at residues 121-141 (AASV…WTLA), 144-164 (ITLF…LGCI), and 172-192 (ALSL…KIIW). A Peptidase S39 domain is found at 207-399 (VEGYKGFSVP…GITSPNYVFE (193 aa)). Catalysis depends on for protease activity residues His255, Asp286, and Ser354. Disordered stretches follow at residues 456-510 (TNAP…AAIS) and 542-639 (VSQK…NSKA). Polar residues predominate over residues 463–487 (TAQTNSAEKTAPSTSAEKTAPTNKP). A compositionally biased stretch (basic residues) spans 551 to 561 (KQNKRGRRGGK). A compositionally biased stretch (polar residues) spans 562–576 (NKQNNLPPTSTQSIS).

It belongs to the peptidase S39B family. Post-translationally, specific enzymatic cleavages in vivo yield mature proteins. The protease probably cleaves itself and releases the VPg protein. The VPg protein is probably further cleaved in its C-terminus.

The protein resides in the membrane. Precursor from which the VPg molecule is probably released at the onset of the RNA synthesis. Essential for virus replication. This chain is Protein P1, found in Solanum tuberosum (Potato).